The following is a 131-amino-acid chain: ATP synthase epsilon chain, chloroplastic (131 aa).

It belongs to the ATPase epsilon chain family. F-type ATPases have 2 components, CF(1) - the catalytic core - and CF(0) - the membrane proton channel. CF(1) has five subunits: alpha(3), beta(3), gamma(1), delta(1), epsilon(1). CF(0) has three main subunits: a, b and c.

It is found in the plastid. Its subcellular location is the chloroplast thylakoid membrane. Functionally, produces ATP from ADP in the presence of a proton gradient across the membrane. This chain is ATP synthase epsilon chain, chloroplastic, found in Oltmannsiellopsis viridis (Marine flagellate).